A 582-amino-acid chain; its full sequence is MSALRAEQQPSRSGERQPLVAQGRWGPRRWRRTAAAAVLLVEMLERAAFFGVTSNLVLYLNSLNFNWDGEHASRATLLFLGASYLLAPVGGWLADVYLGRFLAISLSLLLYLAATGLLLTTITDDGRRSFCGEMPELPLKPACPSANCQGSWSSPYCATTLYLVLLLLALAASSVRSNLTSFGADQVMDLGRDATRRFFNWFYWSINLGAILSLLVVAFIEQNISFLQGYSIIVGLVGLAFFIFLIATPVFITKPPTGSQVSSMLNLAFQNCCPGWQWWRRPSSRNSEGAHLLPDQRSNQPGPSPQEDMANFQVLLKVLPVMVTLVPYWMVYFQMQSTYVLQGLHLHIPNIFRTNPNISLPLRSDSSNYRIPEAWLLLANVAVILILVPVKDHLIDPLLLRCKLLPSALQKMALGMFFGFTSIIVAGVLEKERLQYIAANQTVPQLIGKDLYYAAPLSIWWQIPQYLLIGISEIFASIPGLEFAYSEAPRSMQGAIMGIFFCLSGVGSLLGSGLVALLSLPGGWMYCPKDFGNINNCRMDLYFFLLAGIQAVTAVLFLWIAGRYERTRQDPDSQNSTSRVRG.

The segment at 1-20 (MSALRAEQQPSRSGERQPLV) is disordered. 4 helical membrane passes run 33–53 (TAAA…FGVT), 77–97 (LLFL…ADVY), 102–122 (LAIS…LTTI), and 155–175 (PYCA…ASSV). The N-linked (GlcNAc...) asparagine glycan is linked to Asn-178. Residues 201–221 (WFYWSINLGAILSLLVVAFIE) form a helical membrane-spanning segment. Asn-223 carries N-linked (GlcNAc...) asparagine glycosylation. Helical transmembrane passes span 232–252 (IIVG…PVFI) and 312–332 (FQVL…WMVY). Residue Asn-357 is glycosylated (N-linked (GlcNAc...) asparagine). A run of 2 helical transmembrane segments spans residues 371–391 (IPEA…VPVK) and 409–429 (LQKM…AGVL). N-linked (GlcNAc...) asparagine glycosylation is present at Asn-440. 3 helical membrane-spanning segments follow: residues 466-485 (YLLI…EFAY), 498-518 (GIFF…VALL), and 541-561 (LYFF…LWIA). Asn-575 is a glycosylation site (N-linked (GlcNAc...) asparagine).

Belongs to the major facilitator superfamily. Proton-dependent oligopeptide transporter (POT/PTR) (TC 2.A.17) family. Abundant expression in lung, spleen and thymus, and detected faintly in brain, liver, adrenal gland and heart at protein level.

It localises to the lysosome membrane. The protein resides in the endosome membrane. It carries out the reaction N-acetyl-D-muramoyl-L-alanyl-D-isoglutamine(out) + n H(+)(out) = N-acetyl-D-muramoyl-L-alanyl-D-isoglutamine(in) + n H(+)(in). It catalyses the reaction glycylglycylglycine(out) + n H(+)(out) = glycylglycylglycine(in) + n H(+)(in). The enzyme catalyses carnosine(out) + n H(+)(out) = carnosine(in) + n H(+)(in). The catalysed reaction is L-histidine(out) + n H(+)(out) = L-histidine(in) + n H(+)(in). Proton-coupled amino-acid transporter that transports free histidine and certain di- and tripeptides, and is involved in innate immune response. Also able to transport carnosine. Involved in the detection of microbial pathogens by toll-like receptors (TLRs) and NOD-like receptors (NLRs), probably by mediating transport of bacterial peptidoglycans across the endolysosomal membrane: catalyzes the transport of certain bacterial peptidoglycans, such as muramyl dipeptide (MDP), the NOD2 ligand. The protein is Solute carrier family 15 member 3 (Slc15a3) of Rattus norvegicus (Rat).